An 858-amino-acid chain; its full sequence is Elongation factor 2b (858 aa).

Residues 17–362 (SNIRNMSVIA…MITIHLPSPV (346 aa)) enclose the tr-type G domain. GTP is bound by residues 26-33 (AHVDHGKS), 158-161 (NKMD), and 216-218 (SGL). H715 carries the post-translational modification Diphthamide.

Belongs to the TRAFAC class translation factor GTPase superfamily. Classic translation factor GTPase family. EF-G/EF-2 subfamily. Binds to 80S ribosomes. Actively translating ribosomes show mutually exclusive binding of eIF5a (EIF5A or EIF5A2) and EEF2/eEF2. Interacts with serbp1; interaction sequesters eef2/eEF2 at the A-site of the ribosome, thereby blocking the interaction sites of the mRNA-tRNA complex, promoting ribosome stabilization and hibernation. Interacts with habp4; interaction takes place at the A-site of hibernating ribosomes and promotes ribosome stabilization.

It is found in the cytoplasm. The protein localises to the nucleus. It catalyses the reaction GTP + H2O = GDP + phosphate + H(+). Catalyzes the GTP-dependent ribosomal translocation step during translation elongation. During this step, the ribosome changes from the pre-translocational (PRE) to the post-translocational (POST) state as the newly formed A-site-bound peptidyl-tRNA and P-site-bound deacylated tRNA move to the P and E sites, respectively. Catalyzes the coordinated movement of the two tRNA molecules, the mRNA and conformational changes in the ribosome. This is Elongation factor 2b from Danio rerio (Zebrafish).